The primary structure comprises 882 residues: Translation initiation factor IF-2 (882 aa).

The segment at 28–296 (GIRKSADDSV…LQQGFQKPAQ (269 aa)) is disordered. The segment covering 67–81 (STLNIPGTGGKSKSV) has biased composition (polar residues). Over residues 92-209 (VKRDPQEAER…RMAEENKWTD (118 aa)) the composition is skewed to basic and acidic residues. Positions 244-258 (GRGRNAKAARPKKGN) are enriched in basic residues. Over residues 259 to 272 (KHAESKADREEARA) the composition is skewed to basic and acidic residues. The region spanning 381 to 550 (PRAPVVTIMG…LLQAEVLELK (170 aa)) is the tr-type G domain. The segment at 390-397 (GHVDHGKT) is G1. 390 to 397 (GHVDHGKT) is a binding site for GTP. The tract at residues 415–419 (GITQH) is G2. The segment at 436–439 (DTPG) is G3. GTP-binding positions include 436-440 (DTPGH) and 490-493 (NKID). The G4 stretch occupies residues 490–493 (NKID). The interval 526-528 (SAK) is G5. Position 800 is an N6-acetyllysine (K800).

This sequence belongs to the TRAFAC class translation factor GTPase superfamily. Classic translation factor GTPase family. IF-2 subfamily.

Its subcellular location is the cytoplasm. Its function is as follows. One of the essential components for the initiation of protein synthesis. Protects formylmethionyl-tRNA from spontaneous hydrolysis and promotes its binding to the 30S ribosomal subunits. Also involved in the hydrolysis of GTP during the formation of the 70S ribosomal complex. The polypeptide is Translation initiation factor IF-2 (Shigella boydii serotype 4 (strain Sb227)).